The chain runs to 211 residues: Redox-sensing transcriptional repressor Rex (211 aa).

Residues 18 to 57 (LYYRFIESLHAAGKQRVSSTELSQAVKVDSATIRRDFSYF) constitute a DNA-binding region (H-T-H motif). 92–97 (GVGNLG) lines the NAD(+) pocket.

Belongs to the transcriptional regulatory Rex family. Homodimer.

Its subcellular location is the cytoplasm. Functionally, modulates transcription in response to changes in cellular NADH/NAD(+) redox state. The polypeptide is Redox-sensing transcriptional repressor Rex (Shouchella clausii (strain KSM-K16) (Alkalihalobacillus clausii)).